Here is a 479-residue protein sequence, read N- to C-terminus: MAQGAQRKNFGHNQILRPSAAYTPVDEQEVLQILDRHRGQRIRAVGRLHSWSEAVTGDGVLLDLQRLNDVRLQSDGDQLVATVGAGCQIKRLLKELNREGATLHSLGLITAQTIAGAISTGTHGSGRNSMSHYVVGVRLACYDASTGQAIIEELSAGEPLQAARCSLGSLGIILAVRIRCREQYNVQEHFTESRRLLDVMDAEAPFPLQQFYLLPWRWSYFIQHRREDDRPRSRLARLYRLYWLGTMDYGLILQILFLERVARSRRLIRLAFRRIIPAFLIRNWRVTDRSSSMLVMRHDAFRHIEIELFVRRDQLADALGFTQEVIKIAGGRESALSADNQRRIEELGMQEALAGLHDQYCHHFPICVRRVLPDDTLISMASGAGEDWYALSFISYAKPARRAGFSLFASFMARSMSRLFHARPHWGKVCPLEADELTSLYPRFDAFRTVCNTLDPQGVFQNDWTTALLEADGQVGDFP.

Residues 14–183 (QILRPSAAYT…LAVRIRCREQ (170 aa)) enclose the FAD-binding PCMH-type domain. His49 carries the pros-8alpha-FAD histidine modification. FAD contacts are provided by residues Thr113, Gly116, 120-123 (TGTH), and Ile173. The chain crosses the membrane as a helical span at residues 241 to 258 (LYWLGTMDYGLILQILFL). FAD is bound by residues Arg369 and His425.

This sequence belongs to the oxygen-dependent FAD-linked oxidoreductase family. It depends on FAD as a cofactor.

It is found in the cell membrane. It carries out the reaction a long-chain primary fatty alcohol + O2 = a long-chain fatty aldehyde + H2O2. The catalysed reaction is dodecan-1-ol + O2 = dodecanal + H2O2. It catalyses the reaction tetradecan-1-ol + O2 = tetradecanal + H2O2. The enzyme catalyses octan-1-ol + O2 = octanal + H2O2. It carries out the reaction decan-1-ol + O2 = decanal + H2O2. Its pathway is lipid metabolism; fatty acid metabolism. Its function is as follows. In vitro catalyzes the oxidation of a range of fatty alcohols having a carbon chain length of six and above, with a reduction of O2 to H2O2. Shows the highest activity with 1-dodecanol. Is likely involved in lipid metabolism. This chain is Long-chain alcohol oxidase, found in Uncultured marine euryarchaeote.